The sequence spans 178 residues: Cysteine protease inhibitor 7 (178 aa).

2 cysteine pairs are disulfide-bonded: Cys-41–Cys-93 and Cys-141–Cys-147.

Belongs to the protease inhibitor I3 (leguminous Kunitz-type inhibitor) family.

It is found in the vacuole. Functionally, inhibitor of cysteine proteases. May protect the plant by inhibiting proteases of invading organisms. This Solanum tuberosum (Potato) protein is Cysteine protease inhibitor 7.